We begin with the raw amino-acid sequence, 309 residues long: Homoserine kinase (309 aa).

Residue 91 to 101 (PLARGLGSSAA) coordinates ATP.

Belongs to the GHMP kinase family. Homoserine kinase subfamily.

It is found in the cytoplasm. The enzyme catalyses L-homoserine + ATP = O-phospho-L-homoserine + ADP + H(+). Its pathway is amino-acid biosynthesis; L-threonine biosynthesis; L-threonine from L-aspartate: step 4/5. Functionally, catalyzes the ATP-dependent phosphorylation of L-homoserine to L-homoserine phosphate. This chain is Homoserine kinase, found in Bacillus velezensis (strain DSM 23117 / BGSC 10A6 / LMG 26770 / FZB42) (Bacillus amyloliquefaciens subsp. plantarum).